The following is a 495-amino-acid chain: MSEVLQRLASTEVRKARDPIDRFLERRQLFRKHMLGDASSLFRVVAEQVYDTQMLHYEVRMECVRYMFTKWKTFRRFVSGDFDEYLWHLGKTKTAGTILELGAMCHLYRRNVIIYEPFDMGRMVTYNKDYKEILRIFMNSMGHFETVLTMQDVDMAAVCQSVSFKMLYKHLFRLPDVDLAVEWMLYPDTFKMGTEYEFDSRGRAIRLLCRNGRSFKLDRPESTICLLENSQMCPFHNRRLAMGGQFADFSCMRILLEENNIPFSYLVAKSMDPCRYRNVELTSAIEARREAYEFGIYIGDYNFKVGAKCQVQLDTNRRDLLSACYIQSIDKKKSVCKVFIEEQGKLVDVPSDNLHPLPPDEFKAWDFARKRPQRLHNSQMGRQSVQGDQQGFVPDPMPGTAPSMPPPPVADPRPVNVTAQQPPVFGPSRWMEPTRPLMPNPLMIHQTGSFVFVQQPRVGPPSVMMHVLIIVHNAPYMLAFDHAPHPPAPQCTAPF.

An OTU domain is found at 29–150 (LFRKHMLGDA…MGHFETVLTM (122 aa)). The 63-residue stretch at 302-364 (NFKVGAKCQV…HPLPPDEFKA (63 aa)) folds into the Tudor domain. Over residues 375 to 389 (LHNSQMGRQSVQGDQ) the composition is skewed to polar residues. Residues 375–404 (LHNSQMGRQSVQGDQQGFVPDPMPGTAPSM) are disordered. Residues 395–404 (DPMPGTAPSM) are compositionally biased toward pro residues.

Functionally, putative OTU-type deubiquitinase. Catalytically inactive towards all diubiquitin molecules and long K48- and K63- linked ubiquitin chains in vitro. Potential modulator of apoptosis. The protein is OTU domain-containing protein CG3251 of Drosophila melanogaster (Fruit fly).